Here is a 136-residue protein sequence, read N- to C-terminus: Histone H2A (136 aa).

A compositionally biased stretch (gly residues) spans 1 to 11 (MTGGGKSGGKA). Residues 1–24 (MTGGGKSGGKASGSKNAQSRSSKA) form a disordered region. Lys6 and Lys10 each carry N6-acetyllysine. Gln107 bears the N5-methylglutamine mark. Ser133 is modified (phosphoserine). A [ST]-Q motif motif is present at residues 133-134 (SQ).

Belongs to the histone H2A family. The nucleosome is a histone octamer containing two molecules each of H2A, H2B, H3 and H4 assembled in one H3-H4 heterotetramer and two H2A-H2B heterodimers. The octamer wraps approximately 147 bp of DNA. Phosphorylated to form H2AS128ph (gamma-H2A) in response to DNA double-strand breaks (DSBs) generated by exogenous genotoxic agents and by stalled replication forks. Phosphorylation is dependent on the DNA damage checkpoint kinases MEC1/ATR and TEL1/ATM, spreads on either side of a detected DSB site and may mark the surrounding chromatin for recruitment of proteins required for DNA damage signaling and repair. Gamma-H2A is removed from the DNA prior to the strand invasion-primer extension step of the repair process and subsequently dephosphorylated. Dephosphorylation is necessary for efficient recovery from the DNA damage checkpoint. Post-translationally, acetylated by ESA1 to form H2AK4ac and H2AK7ac.

It is found in the nucleus. It localises to the chromosome. Its function is as follows. Core component of nucleosome which plays a central role in DNA double strand break (DSB) repair. Nucleosomes wrap and compact DNA into chromatin, limiting DNA accessibility to the cellular machineries which require DNA as a template. Histones thereby play a central role in transcription regulation, DNA repair, DNA replication and chromosomal stability. DNA accessibility is regulated via a complex set of post-translational modifications of histones, also called histone code, and nucleosome remodeling. The chain is Histone H2A (HTA1) from Pyricularia oryzae (strain Y34) (Rice blast fungus).